Here is a 491-residue protein sequence, read N- to C-terminus: Cytochrome P450 2B2 (491 aa).

Serine 128 carries the phosphoserine; by PKA modification. Cysteine 436 provides a ligand contact to heme.

This sequence belongs to the cytochrome P450 family. Heme serves as cofactor. In terms of processing, phosphorylation is accompanied by a decrease in enzyme activity.

Its subcellular location is the endoplasmic reticulum membrane. The protein localises to the microsome membrane. The enzyme catalyses an organic molecule + reduced [NADPH--hemoprotein reductase] + O2 = an alcohol + oxidized [NADPH--hemoprotein reductase] + H2O + H(+). Cytochromes P450 are a group of heme-thiolate monooxygenases. In liver microsomes, this enzyme is involved in an NADPH-dependent electron transport pathway. It oxidizes a variety of structurally unrelated compounds, including steroids, fatty acids, and xenobiotics. The chain is Cytochrome P450 2B2 (Cyp2b2) from Rattus norvegicus (Rat).